The chain runs to 372 residues: Queuine tRNA-ribosyltransferase (372 aa).

The Proton acceptor role is filled by Asp89. Substrate-binding positions include 89–93 (DSGGF), Asp161, and Gly232. Residues 262–268 (GIGDLPS) form an RNA binding region. The Nucleophile role is filled by Asp281. The segment at 286–290 (TKAAR) is RNA binding; important for wobble base 34 recognition. Zn(2+) contacts are provided by Cys319, Cys321, Cys324, and His351.

Belongs to the queuine tRNA-ribosyltransferase family. In terms of assembly, homodimer. Within each dimer, one monomer is responsible for RNA recognition and catalysis, while the other monomer binds to the replacement base PreQ1. Zn(2+) is required as a cofactor.

The enzyme catalyses 7-aminomethyl-7-carbaguanine + guanosine(34) in tRNA = 7-aminomethyl-7-carbaguanosine(34) in tRNA + guanine. The protein operates within tRNA modification; tRNA-queuosine biosynthesis. Functionally, catalyzes the base-exchange of a guanine (G) residue with the queuine precursor 7-aminomethyl-7-deazaguanine (PreQ1) at position 34 (anticodon wobble position) in tRNAs with GU(N) anticodons (tRNA-Asp, -Asn, -His and -Tyr). Catalysis occurs through a double-displacement mechanism. The nucleophile active site attacks the C1' of nucleotide 34 to detach the guanine base from the RNA, forming a covalent enzyme-RNA intermediate. The proton acceptor active site deprotonates the incoming PreQ1, allowing a nucleophilic attack on the C1' of the ribose to form the product. After dissociation, two additional enzymatic reactions on the tRNA convert PreQ1 to queuine (Q), resulting in the hypermodified nucleoside queuosine (7-(((4,5-cis-dihydroxy-2-cyclopenten-1-yl)amino)methyl)-7-deazaguanosine). In Chlamydia pneumoniae (Chlamydophila pneumoniae), this protein is Queuine tRNA-ribosyltransferase.